Here is a 64-residue protein sequence, read N- to C-terminus: Large ribosomal subunit protein uL30 (64 aa).

It belongs to the universal ribosomal protein uL30 family. Part of the 50S ribosomal subunit.

This Desulforudis audaxviator (strain MP104C) protein is Large ribosomal subunit protein uL30.